Here is a 90-residue protein sequence, read N- to C-terminus: Protein A54 (90 aa).

This chain is Protein A54, found in Homo sapiens (Human).